Consider the following 934-residue polypeptide: MQRYELIRLIGKGGMGEVYLAHDKACSRRVALKRIREDLSGNALLRQRFLREAKIAADLIHPGIVPVYSICSDGEAVYYTMPYIEGFSLKSLLKSVWQKEVLSKELEEKTSVKSFLPIFDKICATVEYIHSKGVLHRDLKPDNILLGLFGEVVIIDWGAAIFKHAKELKLEQDDEAAVSFDERNICYSSMTIPGKIVGTPDYMAPESLLGVEASEKTDIYALGLILYQMLTLAFPYRRKKGRKLSYRDVVLPPIEMSPYREIPPSLSQIAMKAIAINPADRFSSIQELRQALQPYLQGDPEWTVKATLMAKEKSCWKYYDPILLSRYFPVLASSPAQWYNFMLSEVEISASTRVEYTVTKSAVHEGMGILFLPSKEAERGEFYCGYGLWFSVQNHELTVSLIKNGIEIQKKSQEMISQQSRFAILIEKSDNRIAVFVEQALFILHIDYLPSLGNRLGVIIQDLQGMSNIAISESIGALRVSCLAVPDAFLSEKLYDQAAIFYRKIRDSFPGRKESYEAQFRLGVTLLTQIEEQGGDLTQALSSFDYLHGGAGAPLEYLGKALVYQRNGSFVEEIRCLLFALKRYSQHPEIPRLEDHLCFRLYDSLHKHRSEALVFMLLILWIAPEKISVREEERFLRIIYHKQQATLFCQVDKAPLQFRSSKMELFLSFWTGFSLFLPELFRRAGGLRDYQALADIFYVAGVSGNREAFMQFSTALANVSDEITFPESLHNQKVAELMFFVKGVEALRNKDYQKAKKLLWKTPFTLQLYALDMFHIQAFLDEEIESFIDLLQAIYDPASEEERDHILVYIIQTHLWNRDLERAYKLLNDRFPLDEELAEYSEAFILWGCYLALTGDRVVVKAHFSRCRYKYGKSALIGKCVDGDIFDYLDNLVWWEKKMTLFQSYFLLRCLNESPRRYEKYRQAYLSMENNFFD.

The 293-residue stretch at tyrosine 4–leucine 296 folds into the Protein kinase domain. Residues isoleucine 10 to valine 18 and lysine 33 contribute to the ATP site. Aspartate 138 (proton acceptor) is an active-site residue.

It belongs to the protein kinase superfamily. Ser/Thr protein kinase family. In terms of assembly, interacts with Pkn1. Post-translationally, autophosphorylated on serine and threonine residues.

It catalyses the reaction L-seryl-[protein] + ATP = O-phospho-L-seryl-[protein] + ADP + H(+). The catalysed reaction is L-threonyl-[protein] + ATP = O-phospho-L-threonyl-[protein] + ADP + H(+). Its function is as follows. Together with the serine/threonine kinase Pkn1, may play a role in the specific interactions with host proteins during intracellular growth. Autophosphorylates and also phosphorylates Pkn1. The protein is Serine/threonine-protein kinase PknD of Chlamydia trachomatis serovar D (strain ATCC VR-885 / DSM 19411 / UW-3/Cx).